Consider the following 152-residue polypeptide: Xanthine-guanine phosphoribosyltransferase (152 aa).

Residues 37–38 (RG), Arg-69, and 88–96 (DDLVDTGGT) contribute to the 5-phospho-alpha-D-ribose 1-diphosphate site. GMP is bound at residue Arg-69. A Mg(2+)-binding site is contributed by Asp-89. 2 residues coordinate guanine: Asp-92 and Ile-135. Residues Asp-92 and Ile-135 each contribute to the xanthine site. GMP contacts are provided by residues 92–96 (DTGGT) and 134–135 (WI).

It belongs to the purine/pyrimidine phosphoribosyltransferase family. XGPT subfamily. In terms of assembly, homotetramer. The cofactor is Mg(2+).

Its subcellular location is the cell inner membrane. It carries out the reaction GMP + diphosphate = guanine + 5-phospho-alpha-D-ribose 1-diphosphate. The catalysed reaction is XMP + diphosphate = xanthine + 5-phospho-alpha-D-ribose 1-diphosphate. The enzyme catalyses IMP + diphosphate = hypoxanthine + 5-phospho-alpha-D-ribose 1-diphosphate. Its pathway is purine metabolism; GMP biosynthesis via salvage pathway; GMP from guanine: step 1/1. The protein operates within purine metabolism; XMP biosynthesis via salvage pathway; XMP from xanthine: step 1/1. Its function is as follows. Purine salvage pathway enzyme that catalyzes the transfer of the ribosyl-5-phosphate group from 5-phospho-alpha-D-ribose 1-diphosphate (PRPP) to the N9 position of the 6-oxopurines guanine and xanthine to form the corresponding ribonucleotides GMP (guanosine 5'-monophosphate) and XMP (xanthosine 5'-monophosphate), with the release of PPi. To a lesser extent, also acts on hypoxanthine. The sequence is that of Xanthine-guanine phosphoribosyltransferase from Escherichia coli O7:K1 (strain IAI39 / ExPEC).